A 294-amino-acid chain; its full sequence is Ribosomal protein L11 methyltransferase (294 aa).

Residues Thr-144, Gly-165, Asp-187, and Asn-229 each contribute to the S-adenosyl-L-methionine site.

This sequence belongs to the methyltransferase superfamily. PrmA family.

The protein resides in the cytoplasm. The enzyme catalyses L-lysyl-[protein] + 3 S-adenosyl-L-methionine = N(6),N(6),N(6)-trimethyl-L-lysyl-[protein] + 3 S-adenosyl-L-homocysteine + 3 H(+). Functionally, methylates ribosomal protein L11. This Cellvibrio japonicus (strain Ueda107) (Pseudomonas fluorescens subsp. cellulosa) protein is Ribosomal protein L11 methyltransferase.